Here is a 218-residue protein sequence, read N- to C-terminus: Elongation factor Ts (218 aa).

The segment at 82 to 85 is involved in Mg(2+) ion dislocation from EF-Tu; that stretch reads TDFV.

Belongs to the EF-Ts family.

It is found in the cytoplasm. Its function is as follows. Associates with the EF-Tu.GDP complex and induces the exchange of GDP to GTP. It remains bound to the aminoacyl-tRNA.EF-Tu.GTP complex up to the GTP hydrolysis stage on the ribosome. The polypeptide is Elongation factor Ts (Prochlorococcus marinus (strain NATL1A)).